Consider the following 56-residue polypeptide: Ovomucoid (56 aa).

Residues 6–56 form the Kazal-like domain; sequence VDCSEYPKPDCTTEERPLCGSDNKTYGNKCNFCNAVVESNGTLTLSHFGKC. 3 disulfide bridges follow: C8–C38, C16–C35, and C24–C56. N-linked (GlcNAc...) asparagine glycosylation is present at N45.

The protein localises to the secreted. The protein is Ovomucoid of Francolinus pondicerianus (Grey francolin).